The following is a 184-amino-acid chain: ATP synthase subunit b, chloroplastic (184 aa).

The helical transmembrane segment at 27–49 threads the bilayer; it reads LATNPINLSVVLGVLIFFGKGVL.

The protein belongs to the ATPase B chain family. F-type ATPases have 2 components, F(1) - the catalytic core - and F(0) - the membrane proton channel. F(1) has five subunits: alpha(3), beta(3), gamma(1), delta(1), epsilon(1). F(0) has four main subunits: a(1), b(1), b'(1) and c(10-14). The alpha and beta chains form an alternating ring which encloses part of the gamma chain. F(1) is attached to F(0) by a central stalk formed by the gamma and epsilon chains, while a peripheral stalk is formed by the delta, b and b' chains.

The protein localises to the plastid. Its subcellular location is the chloroplast thylakoid membrane. Its function is as follows. F(1)F(0) ATP synthase produces ATP from ADP in the presence of a proton or sodium gradient. F-type ATPases consist of two structural domains, F(1) containing the extramembraneous catalytic core and F(0) containing the membrane proton channel, linked together by a central stalk and a peripheral stalk. During catalysis, ATP synthesis in the catalytic domain of F(1) is coupled via a rotary mechanism of the central stalk subunits to proton translocation. In terms of biological role, component of the F(0) channel, it forms part of the peripheral stalk, linking F(1) to F(0). The sequence is that of ATP synthase subunit b, chloroplastic from Lepidium virginicum (Virginia pepperweed).